The chain runs to 160 residues: uncharacterized protein (160 aa).

The helical transmembrane segment at 137 to 157 (YNILFVVVILLLLFVAWRCYV) threads the bilayer.

The protein localises to the host membrane. Its subcellular location is the virion. This is an uncharacterized protein from Acanthamoeba polyphaga mimivirus (APMV).